The chain runs to 125 residues: Ixonnexin (125 aa).

A signal peptide spans 1–21 (MGLTGTTLVLVCVAFFGSAAA). Asn-26 is a glycosylation site (N-linked (GlcNAc...) asparagine). Positions 81 to 125 (TSSGGPDDTGDNTPPPTEKPKQKKKKPKKTKKPKRKSKKDQKENF) are disordered. A compositionally biased stretch (basic residues) spans 101–119 (KQKKKKPKKTKKPKRKSKK).

Belongs to the salp14 family. In terms of assembly, homodimer. Interacts with host PLG. Interacts with host PLAT. In terms of tissue distribution, saliva (at protein level).

Its subcellular location is the secreted. In terms of biological role, salivary protein that promotes host fibrinolysis via accelerating host plasmin generation from plasminogen (PLG) initiated by tPA/tissue-type plasminogen activator (PLAT). Does not affect urokinase (PLAU)-mediated fibrinolysis in the host. Enhances amidolytic activity of host coagulation factor Xa (F10). The protein is Ixonnexin of Ixodes scapularis (Black-legged tick).